The sequence spans 301 residues: Acetylglutamate kinase (301 aa).

Residues 68-69 (GG), R90, and N195 each bind substrate.

The protein belongs to the acetylglutamate kinase family. ArgB subfamily.

It is found in the cytoplasm. It catalyses the reaction N-acetyl-L-glutamate + ATP = N-acetyl-L-glutamyl 5-phosphate + ADP. The protein operates within amino-acid biosynthesis; L-arginine biosynthesis; N(2)-acetyl-L-ornithine from L-glutamate: step 2/4. Its function is as follows. Catalyzes the ATP-dependent phosphorylation of N-acetyl-L-glutamate. The sequence is that of Acetylglutamate kinase from Pseudomonas aeruginosa (strain LESB58).